Consider the following 252-residue polypeptide: Imidazole glycerol phosphate synthase subunit HisF (252 aa).

Catalysis depends on residues Asp11 and Asp130.

The protein belongs to the HisA/HisF family. As to quaternary structure, heterodimer of HisH and HisF.

The protein localises to the cytoplasm. It carries out the reaction 5-[(5-phospho-1-deoxy-D-ribulos-1-ylimino)methylamino]-1-(5-phospho-beta-D-ribosyl)imidazole-4-carboxamide + L-glutamine = D-erythro-1-(imidazol-4-yl)glycerol 3-phosphate + 5-amino-1-(5-phospho-beta-D-ribosyl)imidazole-4-carboxamide + L-glutamate + H(+). It participates in amino-acid biosynthesis; L-histidine biosynthesis; L-histidine from 5-phospho-alpha-D-ribose 1-diphosphate: step 5/9. In terms of biological role, IGPS catalyzes the conversion of PRFAR and glutamine to IGP, AICAR and glutamate. The HisF subunit catalyzes the cyclization activity that produces IGP and AICAR from PRFAR using the ammonia provided by the HisH subunit. In Bacillus cereus (strain G9842), this protein is Imidazole glycerol phosphate synthase subunit HisF.